We begin with the raw amino-acid sequence, 557 residues long: E3 ubiquitin-protein ligase ARIH1 (557 aa).

The span at 1–47 (MDSDEGYNYEFDEDEECSEEDSGAEEEEDEDDDEPDDDTLDLGEVEL) shows a compositional bias: acidic residues. The interval 1–95 (MDSDEGYNYE…GGGGGPGHEQ (95 aa)) is disordered. A compositionally biased stretch (gly residues) spans 65–92 (ETGGGGGSALGPGGGGGGGGGGGGGGPG). Residues 105–153 (TAEQILQHMVECIREVNEVIQNPATITRILLSHFNWDKEKLMERYFDGN) are UBA-like. Lys-142 carries the N6-acetyllysine modification. The interval 182-393 (QDMPCQICYL…SAWYNCNRYN (212 aa)) is TRIAD supradomain. Zn(2+) contacts are provided by Cys-186, Cys-189, Cys-203, His-205, Cys-208, Cys-211, Cys-231, Cys-236, Cys-276, Cys-281, Cys-297, Cys-299, Cys-304, Cys-307, His-312, Cys-317, Cys-344, and Cys-347. Residues 186-236 (CQICYLNYPNSYFTGLECGHKFCMQCWSEYLTTKIMEEGMGQTISCPAHGC) form an RING-type 1 zinc finger. The segment at 256 to 317 (LKYQHLITNS…GENWHDPVKC (62 aa)) adopts an IBR-type zinc-finger fold. Residues 344–375 (CPKCHVTIEKDGGCNHMVCRNQNCKAEFCWVC) form an RING-type 2; atypical zinc finger. Cys-357 is an active-site residue. 6 residues coordinate Zn(2+): Cys-362, Cys-367, Cys-372, Cys-375, His-382, and Cys-389. The tract at residues 408–557 (RAALQRYLFY…EKDLWEYIED (150 aa)) is ariadne domain.

This sequence belongs to the RBR family. Ariadne subfamily. As to quaternary structure, interacts (via the first RING-type zinc finger) with UBE2L3. Associates with cullin-RING ubiquitin ligase (CRL) complexes containing CUL1, CUL2 and CUL3. Interacts with neddylated CUL1. Interacts with neddylated CUL2. Interacts with neddylated CUL3. Interacts with neddylated CUL4A. Widely expressed.

It localises to the cytoplasm. It is found in the nucleus. The protein localises to the cajal body. It catalyses the reaction [E2 ubiquitin-conjugating enzyme]-S-ubiquitinyl-L-cysteine + [acceptor protein]-L-lysine = [E2 ubiquitin-conjugating enzyme]-L-cysteine + [acceptor protein]-N(6)-ubiquitinyl-L-lysine.. Its pathway is protein modification; protein ubiquitination. Autoinhibited by the ariadne domain, which masks the second RING-type zinc finger that contains the active site and inhibits the E3 activity. Inhibition is relieved upon binding to neddylated cullin-RING ubiquitin ligase complexes, which activate the E3 ligase activity of ARIH1. Its function is as follows. E3 ubiquitin-protein ligase, which catalyzes ubiquitination of target proteins together with ubiquitin-conjugating enzyme E2 UBE2L3. Acts as an atypical E3 ubiquitin-protein ligase by working together with cullin-RING ubiquitin ligase (CRL) complexes and initiating ubiquitination of CRL substrates: associates with CRL complexes and specifically mediates addition of the first ubiquitin on CRLs targets. The initial ubiquitin is then elongated by CDC34/UBE2R1 and UBE2R2. E3 ubiquitin-protein ligase activity is activated upon binding to neddylated cullin-RING ubiquitin ligase complexes. Plays a role in protein translation in response to DNA damage by mediating ubiquitination of EIF4E2, the consequences of EIF4E2 ubiquitination are however unclear. According to a report, EIF4E2 ubiquitination leads to promote EIF4E2 cap-binding and protein translation arrest. According to another report EIF4E2 ubiquitination leads to its subsequent degradation. Acts as the ligase involved in ISGylation of EIF4E2. In vitro, controls the degradation of the LINC (LInker of Nucleoskeleton and Cytoskeleton) complex member SUN2 and may therefore have a role in the formation and localization of the LINC complex, and as a consequence, nuclear subcellular localization and nuclear morphology. The chain is E3 ubiquitin-protein ligase ARIH1 from Homo sapiens (Human).